The chain runs to 252 residues: Thiazole synthase (252 aa).

Lys95 acts as the Schiff-base intermediate with DXP in catalysis. 1-deoxy-D-xylulose 5-phosphate-binding positions include Gly156, 182 to 183 (AG), and 204 to 205 (NT).

Belongs to the ThiG family. Homotetramer. Forms heterodimers with either ThiH or ThiS.

It localises to the cytoplasm. The catalysed reaction is [ThiS sulfur-carrier protein]-C-terminal-Gly-aminoethanethioate + 2-iminoacetate + 1-deoxy-D-xylulose 5-phosphate = [ThiS sulfur-carrier protein]-C-terminal Gly-Gly + 2-[(2R,5Z)-2-carboxy-4-methylthiazol-5(2H)-ylidene]ethyl phosphate + 2 H2O + H(+). Its pathway is cofactor biosynthesis; thiamine diphosphate biosynthesis. In terms of biological role, catalyzes the rearrangement of 1-deoxy-D-xylulose 5-phosphate (DXP) to produce the thiazole phosphate moiety of thiamine. Sulfur is provided by the thiocarboxylate moiety of the carrier protein ThiS. In vitro, sulfur can be provided by H(2)S. The sequence is that of Thiazole synthase from Shewanella sp. (strain ANA-3).